Here is a 1163-residue protein sequence, read N- to C-terminus: GTPase-activating protein (1163 aa).

2 consecutive C2 domains span residues 26 to 148 (PSSN…DHWF) and 261 to 419 (TTST…SAWY). The Ras-GAP domain occupies 520–737 (ERIAPIIKAL…DAVKHFLEVI (218 aa)). Residues 762-860 (LKEGLMTKYP…WFDLLHKICL (99 aa)) form the PH domain. The Btk-type zinc-finger motif lies at 862 to 898 (NSIRMQYFHPSAFVSGFYSCCGRSDENSPGCKKVLDK). His870, Cys881, Cys882, and Cys892 together coordinate Zn(2+). 2 disordered regions span residues 1026–1051 (LNQQ…LQQF) and 1091–1163 (PFHQ…PPIY). The segment covering 1091-1157 (PFHQQQQQHH…APPSTTSSSQ (67 aa)) has biased composition (low complexity).

Interacts with sty. As to expression, in third instar larvae eye imaginal disk, expressed in cells posterior to the morphogenetic furrow, in all photoreceptor and cone cell precursors as well as in still uncommitted cells.

Inhibitory regulator of the Ras-cyclic AMP pathway. May function as a negative regulator of Ras85D/Ras1 in the sev signaling pathway. Acts cell autonomously in cone cell precursors as a negative regulator of R7 photoreceptor cell determination. The protein is GTPase-activating protein (RasGAP1) of Drosophila melanogaster (Fruit fly).